Here is a 320-residue protein sequence, read N- to C-terminus: MNKFKNIAVYGGGSFGTSLASVVARNCNNVTLFLRNETILKEILYKKTNVQYLGDIKLPTNLQATTNLSVIKDFDLIIIAVPSYAFVDAIKLLKTYGISKDNTLLVATKGFAHNPTELLSDRLNTLLPDNPIGFLSGPNLAKELAKNLHTSASIASLDIDIANKIAHNLSSKTFTTNTTIDIVTLQVAGALKNIFAIKSGIDLAREQGANSRAMLIVAALKEITTLSKVLGGMQKNSDILLEAGVVGDLVLTCYSLGSRNTKFGYEFEISMDKKKFLREYKELVEGREALKLVLDLIKKYNLHMPIVSEVASLIHCGIYI.

The NADPH site is built by serine 14, phenylalanine 15, arginine 35, and lysine 109. 2 residues coordinate sn-glycerol 3-phosphate: lysine 109 and glycine 137. Alanine 141 lines the NADPH pocket. Residues lysine 192, aspartate 248, serine 258, arginine 259, and asparagine 260 each coordinate sn-glycerol 3-phosphate. The Proton acceptor role is filled by lysine 192. Residue arginine 259 coordinates NADPH. Leucine 283 and glutamate 285 together coordinate NADPH.

Belongs to the NAD-dependent glycerol-3-phosphate dehydrogenase family.

The protein localises to the cytoplasm. It catalyses the reaction sn-glycerol 3-phosphate + NAD(+) = dihydroxyacetone phosphate + NADH + H(+). The catalysed reaction is sn-glycerol 3-phosphate + NADP(+) = dihydroxyacetone phosphate + NADPH + H(+). It participates in membrane lipid metabolism; glycerophospholipid metabolism. Functionally, catalyzes the reduction of the glycolytic intermediate dihydroxyacetone phosphate (DHAP) to sn-glycerol 3-phosphate (G3P), the key precursor for phospholipid synthesis. This Rickettsia typhi (strain ATCC VR-144 / Wilmington) protein is Glycerol-3-phosphate dehydrogenase [NAD(P)+].